The following is a 205-amino-acid chain: Small ribosomal subunit protein uS4 (205 aa).

Basic and acidic residues predominate over residues M1–G16. Residues M1–S46 form a disordered region. The region spanning S94–V157 is the S4 RNA-binding domain.

The protein belongs to the universal ribosomal protein uS4 family. In terms of assembly, part of the 30S ribosomal subunit. Contacts protein S5. The interaction surface between S4 and S5 is involved in control of translational fidelity.

In terms of biological role, one of the primary rRNA binding proteins, it binds directly to 16S rRNA where it nucleates assembly of the body of the 30S subunit. With S5 and S12 plays an important role in translational accuracy. This Bartonella henselae (strain ATCC 49882 / DSM 28221 / CCUG 30454 / Houston 1) (Rochalimaea henselae) protein is Small ribosomal subunit protein uS4.